The chain runs to 539 residues: Chaperonin GroEL (539 aa).

Residues 30–33 (TLGP), Lys51, 87–91 (DGTTT), Gly415, 479–481 (NAA), and Asp495 each bind ATP.

This sequence belongs to the chaperonin (HSP60) family. As to quaternary structure, forms a cylinder of 14 subunits composed of two heptameric rings stacked back-to-back. Interacts with the co-chaperonin GroES.

The protein localises to the cytoplasm. It carries out the reaction ATP + H2O + a folded polypeptide = ADP + phosphate + an unfolded polypeptide.. Its function is as follows. Together with its co-chaperonin GroES, plays an essential role in assisting protein folding. The GroEL-GroES system forms a nano-cage that allows encapsulation of the non-native substrate proteins and provides a physical environment optimized to promote and accelerate protein folding. The polypeptide is Chaperonin GroEL (Kluyvera intermedia (Enterobacter intermedius)).